The primary structure comprises 404 residues: MAENGDNEKMAALEAKICHQIEYYFGDFNLPRDKFLKEQIKLDEGWVPLEIMIKFNRLNRLTTDFNVIVEALSKSKAELMEISEDKTKIRRSPSKPLPEVTDEYKNDVKNRSVYIKGFPTDAALDDIKEWLEDKGQVLNIQMRRTLHKAFKGSIFAVFDSIESAKKFVETPGQKYKDTDLLILFKEDYFTKKNEERKQNKMEAKLRAKQEQEEKQKLAENAEMKSLEEKIGCLLKFSGDLDDQTCREDLHTLFSNHGEIKWIHFVRGAKEGIILFKEKAKEALDKAKEANNGNLQLRNKEVTWEVLEGDVEKEALKKIIEDQQESLNKWKSKGRRFKGKGKGNKAAQAGSAKGKVQFQGKKTKFDSDDERDENGASRAVKRAREETDKEPPSKQQKTENGAGDQ.

Residues 7 to 99 (NEKMAALEAK…RRSPSKPLPE (93 aa)) enclose the HTH La-type RNA-binding domain. Phosphoserine occurs at positions 92 and 94. One can recognise an RRM domain in the interval 111 to 187 (RSVYIKGFPT…TDLLILFKED (77 aa)). Lysine 116 carries the post-translational modification N6-acetyllysine. Threonine 120 carries the post-translational modification Phosphothreonine. The residue at position 128 (lysine 128) is an N6-acetyllysine. Serine 225 carries the phosphoserine modification. Positions 227–348 (EEKIGCLLKF…KGKGNKAAQA (122 aa)) constitute a xRRM domain. Residues lysine 328 and lysine 341 each carry the N6-acetyllysine modification. Positions 329-342 (WKSKGRRFKGKGKG) are enriched in basic residues. A disordered region spans residues 329 to 404 (WKSKGRRFKG…QKTENGAGDQ (76 aa)). Positions 343 to 354 (NKAAQAGSAKGK) are enriched in low complexity. At lysine 360 the chain carries N6-acetyllysine. Residue threonine 362 is modified to Phosphothreonine. Serine 366 carries the post-translational modification Phosphoserine. Residues 381–391 (RAREETDKEPP) are compositionally biased toward basic and acidic residues.

As to quaternary structure, interacts with DDX15. May interact with RUFY1. Phosphorylated in the C-terminal part of the protein.

It is found in the nucleus. Functionally, binds to the 3' poly(U) terminus of nascent RNA polymerase III transcripts, protecting them from exonuclease digestion and facilitating their folding and maturation. In Bos taurus (Bovine), this protein is Lupus La protein homolog (SSB).